We begin with the raw amino-acid sequence, 907 residues long: Putative ATP-dependent DNA helicase DDX11-like protein 8 (907 aa).

The 439-residue stretch at 9 to 447 (GAIHFPFPFT…KNLMYLKQIL (439 aa)) folds into the Helicase ATP-binding domain. 44–51 (SPTGTGKS) provides a ligand contact to ATP. The disordered stretch occupies residues 202 to 222 (YESDEEKKVASGHRVDEDEDD). A compositionally biased stretch (basic and acidic residues) spans 206–217 (EEKKVASGHRVD). Position 264 is a phosphoserine (S264). The [4Fe-4S] cluster site is built by C269 and C287. Basic and acidic residues predominate over residues 291-306 (QRSRHEKKKGAEEEKP). The tract at residues 291-314 (QRSRHEKKKGAEEEKPKRRRQEKQ) is disordered. C317 and C352 together coordinate [4Fe-4S] cluster. The DEAH signature appears at 395–398 (DEAH).

The protein belongs to the DEAD box helicase family. DEAH subfamily. DDX11/CHL1 sub-subfamily. Requires [4Fe-4S] cluster as cofactor.

The protein localises to the nucleus. It is found in the nucleolus. Its function is as follows. Putative DNA helicase. In Homo sapiens (Human), this protein is Putative ATP-dependent DNA helicase DDX11-like protein 8 (DDX11L8).